The primary structure comprises 1070 residues: Carbamoyl phosphate synthase large chain (1070 aa).

Residues 1–401 (MPKRDDIKTI…ALLKAVRSLE (401 aa)) form a carboxyphosphate synthetic domain region. 12 residues coordinate ATP: Arg-129, Arg-169, Gly-175, Gly-176, Lys-208, Ile-210, Glu-215, Gly-241, Ile-242, His-243, Gln-284, and Glu-298. In terms of domain architecture, ATP-grasp 1 spans 133–327 (RDLMNELGEP…IAKLAAKIAV (195 aa)). Residues Gln-284, Glu-298, and Asn-300 each coordinate Mg(2+). The Mn(2+) site is built by Gln-284, Glu-298, and Asn-300. Residues 402–546 (VGADHLLLEE…YSTYEEENES (145 aa)) are oligomerization domain. Residues 547–929 (TRSAKESVIV…ALYKGFVASG (383 aa)) form a carbamoyl phosphate synthetic domain region. In terms of domain architecture, ATP-grasp 2 spans 671-861 (EKALEILQIP…MANVATRVIL (191 aa)). Positions 707, 746, 748, 752, 777, 778, 779, 780, 820, and 832 each coordinate ATP. Residues Gln-820, Glu-832, and Asn-834 each coordinate Mg(2+). 3 residues coordinate Mn(2+): Gln-820, Glu-832, and Asn-834. Residues 930-1070 (TTMHDYGTVL…SEVKQPKVRV (141 aa)) form the MGS-like domain. Residues 930 to 1070 (TTMHDYGTVL…SEVKQPKVRV (141 aa)) form an allosteric domain region.

It belongs to the CarB family. In terms of assembly, composed of two chains; the small (or glutamine) chain promotes the hydrolysis of glutamine to ammonia, which is used by the large (or ammonia) chain to synthesize carbamoyl phosphate. Tetramer of heterodimers (alpha,beta)4. Mg(2+) is required as a cofactor. It depends on Mn(2+) as a cofactor.

The catalysed reaction is hydrogencarbonate + L-glutamine + 2 ATP + H2O = carbamoyl phosphate + L-glutamate + 2 ADP + phosphate + 2 H(+). It catalyses the reaction hydrogencarbonate + NH4(+) + 2 ATP = carbamoyl phosphate + 2 ADP + phosphate + 2 H(+). It functions in the pathway amino-acid biosynthesis; L-arginine biosynthesis; carbamoyl phosphate from bicarbonate: step 1/1. The protein operates within pyrimidine metabolism; UMP biosynthesis via de novo pathway; (S)-dihydroorotate from bicarbonate: step 1/3. In terms of biological role, large subunit of the glutamine-dependent carbamoyl phosphate synthetase (CPSase). CPSase catalyzes the formation of carbamoyl phosphate from the ammonia moiety of glutamine, carbonate, and phosphate donated by ATP, constituting the first step of 2 biosynthetic pathways, one leading to arginine and/or urea and the other to pyrimidine nucleotides. The large subunit (synthetase) binds the substrates ammonia (free or transferred from glutamine from the small subunit), hydrogencarbonate and ATP and carries out an ATP-coupled ligase reaction, activating hydrogencarbonate by forming carboxy phosphate which reacts with ammonia to form carbamoyl phosphate. This Listeria welshimeri serovar 6b (strain ATCC 35897 / DSM 20650 / CCUG 15529 / CIP 8149 / NCTC 11857 / SLCC 5334 / V8) protein is Carbamoyl phosphate synthase large chain.